A 401-amino-acid polypeptide reads, in one-letter code: Solute carrier family 22 member 17 (401 aa).

A run of 10 helical transmembrane segments spans residues 10–30 (GIVLLTLGLVGPCGVGGAAAG), 35–55 (IMALRFLLGFLLAGVDLGVYL), 69–89 (VALAGELVGVGGHFLFLGLAL), 100–120 (MITAPCILFLFYGWPGLFLES), 184–203 (NIWKNLLILGFTNFIAHAIR), 218–238 (FYLCSLLASGTAALACVFLGV), 247–267 (GILLLSMTLTGIASLVLLGLW), 277–297 (TFSVLGLFSSQASAILSTLLA), 309–329 (GLGLIMALGALGGLSCPAQRL), and 336–356 (FLQHVVLAACALLCILSIMLL).

The protein belongs to the major facilitator (TC 2.A.1) superfamily. Organic cation transporter (TC 2.A.1.19) family. Widely expressed.

It is found in the cell membrane. Its subcellular location is the vacuole membrane. Functionally, cell surface receptor for LCN2 (24p3) that plays a key role in iron homeostasis and transport. Able to bind iron-bound LCN2 (holo-24p3), followed by internalization of holo-24p3 and release of iron, thereby increasing intracellular iron concentration and leading to inhibition of apoptosis. Also binds iron-free LCN2 (apo-24p3), followed by internalization of apo-24p3 and its association with an intracellular siderophore, leading to iron chelation and iron transfer to the extracellular medium, thereby reducing intracellular iron concentration and resulting in apoptosis. The sequence is that of Solute carrier family 22 member 17 (Slc22a17) from Mus musculus (Mouse).